The sequence spans 471 residues: GTPase Der (471 aa).

EngA-type G domains lie at 3–168 (PIVA…PDLS) and 178–353 (VRVA…ANHA). Residues 9–16 (GRPNVGKS), 56–60 (DTGGI), 120–123 (NKVE), 184–191 (GRPNVGKS), 231–235 (DTAGM), and 296–299 (NKWD) contribute to the GTP site. Residues 354–438 (RRISTRELND…PINLYFRTRE (85 aa)) enclose the KH-like domain.

Belongs to the TRAFAC class TrmE-Era-EngA-EngB-Septin-like GTPase superfamily. EngA (Der) GTPase family. Associates with the 50S ribosomal subunit.

In terms of biological role, GTPase that plays an essential role in the late steps of ribosome biogenesis. This Symbiobacterium thermophilum (strain DSM 24528 / JCM 14929 / IAM 14863 / T) protein is GTPase Der.